The primary structure comprises 361 residues: Aminomethyltransferase (361 aa).

The protein belongs to the GcvT family. In terms of assembly, the glycine cleavage system is composed of four proteins: P, T, L and H.

The catalysed reaction is N(6)-[(R)-S(8)-aminomethyldihydrolipoyl]-L-lysyl-[protein] + (6S)-5,6,7,8-tetrahydrofolate = N(6)-[(R)-dihydrolipoyl]-L-lysyl-[protein] + (6R)-5,10-methylene-5,6,7,8-tetrahydrofolate + NH4(+). In terms of biological role, the glycine cleavage system catalyzes the degradation of glycine. In Bacteroides fragilis (strain ATCC 25285 / DSM 2151 / CCUG 4856 / JCM 11019 / LMG 10263 / NCTC 9343 / Onslow / VPI 2553 / EN-2), this protein is Aminomethyltransferase.